A 134-amino-acid polypeptide reads, in one-letter code: Profilin-2 (134 aa).

A disulfide bond links C13 and C118. Positions 84–100 match the Involved in PIP2 interaction motif; it reads AVIRGKKGSGGITIKKT. Residue T114 is modified to Phosphothreonine.

Belongs to the profilin family. Occurs in many kinds of cells as a complex with monomeric actin in a 1:1 ratio. In terms of processing, phosphorylated by MAP kinases.

It is found in the cytoplasm. The protein resides in the cytoskeleton. Binds to actin and affects the structure of the cytoskeleton. At high concentrations, profilin prevents the polymerization of actin, whereas it enhances it at low concentrations. The protein is Profilin-2 of Olea europaea (Common olive).